The following is a 506-amino-acid chain: MEEFKRNLELDRSQQHDFIYPLIFQEYIYALAHDRGLNRSIFLEDTGYDNKSSLLIVKRLITHLITQMYQQNHFLFSGNDSNQNKFLGYNTNFYSQMIFEGFAVVVEIPFYLRLLSFLEGKERVKSHNLRSIHSIFPFLEDKFSHLVYVLDILISHPIHLEILVQTLRYWVKDASSLHLLRFFLHEYPIWNSLITPKKSSFSFSIRNQRFFLFLYNFNVWEYESIFVFLRNQSSHLRSISSETFLERISFYRKIELEVFTKDFKAILWVFKEPFLHYVRYRGKAILASKGTFLLMNKWKYYLVNFWQCYFYMWSQPRRININQLSNHSLDFLGYLSTVRLKPLMVRSQMIENSFLIENASKKFDTLMPITPMIGSLSKAKFCNVLGHPMSKPVWAALSDSDIIERFGRIYRNLSHYYSGSLKKMSLYRIKYILRLSCARTLARKHKSTVRAFLKRLGVGLLEEFFTEEEQVFYLTFAKASSNSGELYRRRVWYLDIICINDLANYE.

This sequence belongs to the intron maturase 2 family. MatK subfamily.

The protein resides in the plastid. It is found in the chloroplast. Functionally, usually encoded in the trnK tRNA gene intron. Probably assists in splicing its own and other chloroplast group II introns. This is Maturase K from Rhododendron tsusiophyllum (Rhododendron).